The following is a 347-amino-acid chain: L-threonine 3-dehydrogenase (347 aa).

Cysteine 42 is a binding site for Zn(2+). Active-site charge relay system residues include threonine 44 and histidine 47. Positions 67, 68, 97, 100, 103, and 111 each coordinate Zn(2+). NAD(+) contacts are provided by residues isoleucine 180, aspartate 200, arginine 205, 267–269 (LSL), and 292–293 (IT).

It belongs to the zinc-containing alcohol dehydrogenase family. In terms of assembly, homotetramer. Zn(2+) serves as cofactor.

It is found in the cytoplasm. It catalyses the reaction L-threonine + NAD(+) = (2S)-2-amino-3-oxobutanoate + NADH + H(+). The protein operates within amino-acid degradation; L-threonine degradation via oxydo-reductase pathway; glycine from L-threonine: step 1/2. Functionally, catalyzes the NAD(+)-dependent oxidation of L-threonine to 2-amino-3-ketobutyrate. The protein is L-threonine 3-dehydrogenase of Bacillus velezensis (strain DSM 23117 / BGSC 10A6 / LMG 26770 / FZB42) (Bacillus amyloliquefaciens subsp. plantarum).